The following is a 208-amino-acid chain: Protein-L-isoaspartate O-methyltransferase (208 aa).

Serine 59 is a catalytic residue.

This sequence belongs to the methyltransferase superfamily. L-isoaspartyl/D-aspartyl protein methyltransferase family.

It localises to the cytoplasm. It carries out the reaction [protein]-L-isoaspartate + S-adenosyl-L-methionine = [protein]-L-isoaspartate alpha-methyl ester + S-adenosyl-L-homocysteine. Functionally, catalyzes the methyl esterification of L-isoaspartyl residues in peptides and proteins that result from spontaneous decomposition of normal L-aspartyl and L-asparaginyl residues. It plays a role in the repair and/or degradation of damaged proteins. This Yersinia pseudotuberculosis serotype O:1b (strain IP 31758) protein is Protein-L-isoaspartate O-methyltransferase.